The following is a 638-amino-acid chain: Neuroendocrine convertase 2 (638 aa).

An N-terminal signal peptide occupies residues 1–25 (MKGGCVSQWKAAAGLLFCVTVFASA). The propeptide occupies 26–109 (ERPVFTNHFL…QQEGFDRKKR (84 aa)). In terms of domain architecture, Peptidase S8 spans 129–453 (QWYLINTGQA…YGVLDAGAMV (325 aa)). Residues D167 and H208 each act as charge relay system in the active site. Disulfide bonds link C225–C376 and C317–C347. N-linked (GlcNAc...) asparagine glycosylation is present at N375. S384 functions as the Charge relay system in the catalytic mechanism. One can recognise a P/Homo B domain in the interval 461–597 (TVPERFHCVG…TLMLHGSQSA (137 aa)). A disulfide bridge links C468 with C494. N514 and N524 each carry an N-linked (GlcNAc...) asparagine glycan.

This sequence belongs to the peptidase S8 family. Furin subfamily.

The protein localises to the cytoplasmic vesicle. The protein resides in the secretory vesicle. It is found in the secreted. It carries out the reaction Release of protein hormones and neuropeptides from their precursors, generally by hydrolysis of -Lys-Arg-|- bonds.. In terms of biological role, serine endopeptidase which is involved in the processing of hormone and other protein precursors at sites comprised of pairs of basic amino acid residues. Responsible for the release of glucagon from proglucagon in pancreatic A cells. This is Neuroendocrine convertase 2 (PCSK2) from Sus scrofa (Pig).